The primary structure comprises 103 residues: Phosphoribosyl-ATP pyrophosphatase (103 aa).

This sequence belongs to the PRA-PH family.

The protein localises to the cytoplasm. The catalysed reaction is 1-(5-phospho-beta-D-ribosyl)-ATP + H2O = 1-(5-phospho-beta-D-ribosyl)-5'-AMP + diphosphate + H(+). It functions in the pathway amino-acid biosynthesis; L-histidine biosynthesis; L-histidine from 5-phospho-alpha-D-ribose 1-diphosphate: step 2/9. This chain is Phosphoribosyl-ATP pyrophosphatase (hisE), found in Rhodobacter capsulatus (strain ATCC BAA-309 / NBRC 16581 / SB1003).